Here is a 452-residue protein sequence, read N- to C-terminus: Isocitrate dehydrogenase [NADP], mitochondrial (452 aa).

A mitochondrion-targeting transit peptide spans 1 to 39 (MAGYLRVVRSLCRASGSRPAWAPAALTAPTSQEQPRRHY). Lys-45, Lys-48, Lys-67, and Lys-69 each carry N6-acetyllysine. Residues Lys-80 and Lys-106 each carry the N6-acetyllysine; alternate modification. 2 positions are modified to N6-succinyllysine; alternate: Lys-80 and Lys-106. Residues 115–117 (TIT) and Arg-122 contribute to the NADP(+) site. Residue Thr-117 coordinates D-threo-isocitrate. D-threo-isocitrate-binding positions include 134–140 (SPNGTIR) and Arg-149. At Lys-155 the chain carries N6-acetyllysine. Position 166 is an N6-acetyllysine; alternate (Lys-166). Position 166 is an N6-succinyllysine; alternate (Lys-166). Arg-172 contacts D-threo-isocitrate. N6-acetyllysine; alternate occurs at positions 180 and 193. Residues Lys-180 and Lys-193 each carry the N6-succinyllysine; alternate modification. Residue Lys-199 is modified to N6-acetyllysine. Lys-256 is subject to N6-acetyllysine; alternate. Lys-256 carries the post-translational modification N6-succinyllysine; alternate. Lys-263, Lys-272, Lys-275, and Lys-280 each carry N6-acetyllysine. Lys-282 is subject to N6-acetyllysine; alternate. An N6-succinyllysine; alternate modification is found at Lys-282. Asp-291 provides a ligand contact to Mn(2+). NADP(+) is bound at residue Lys-299. Asp-314 lines the Mn(2+) pocket. Residues 349–354 (GTVTRH) and Asn-367 each bind NADP(+). N6-acetyllysine; alternate is present on Lys-384. Lys-384 is modified (N6-succinyllysine; alternate). Lys-400, Lys-413, and Lys-442 each carry N6-acetyllysine.

This sequence belongs to the isocitrate and isopropylmalate dehydrogenases family. Homodimer. The cofactor is Mg(2+). Mn(2+) serves as cofactor. In terms of processing, acetylation at Lys-413 dramatically reduces catalytic activity. Deacetylated by SIRT3.

The protein localises to the mitochondrion. The enzyme catalyses D-threo-isocitrate + NADP(+) = 2-oxoglutarate + CO2 + NADPH. Plays a role in intermediary metabolism and energy production. It may tightly associate or interact with the pyruvate dehydrogenase complex. The sequence is that of Isocitrate dehydrogenase [NADP], mitochondrial (IDH2) from Homo sapiens (Human).